The following is a 748-amino-acid chain: Malate synthase G (748 aa).

Acetyl-CoA is bound by residues V141, 148-149 (RF), S298, and R335. R362 (proton acceptor) is an active-site residue. Glyoxylate-binding positions include R362, E453, and 478–481 (GFLD). Mg(2+) contacts are provided by E453 and D481. An acetyl-CoA-binding site is contributed by P562. C639 is modified (cysteine sulfenic acid (-SOH)). The active-site Proton donor is D653.

It belongs to the malate synthase family. GlcB subfamily. In terms of assembly, monomer. Mg(2+) serves as cofactor.

The protein resides in the cytoplasm. The enzyme catalyses glyoxylate + acetyl-CoA + H2O = (S)-malate + CoA + H(+). Its pathway is carbohydrate metabolism; glyoxylate cycle; (S)-malate from isocitrate: step 2/2. Functionally, involved in the glycolate utilization. Catalyzes the condensation and subsequent hydrolysis of acetyl-coenzyme A (acetyl-CoA) and glyoxylate to form malate and CoA. The sequence is that of Malate synthase G from Corynebacterium efficiens (strain DSM 44549 / YS-314 / AJ 12310 / JCM 11189 / NBRC 100395).